We begin with the raw amino-acid sequence, 166 residues long: KH homology domain-containing protein 1A (166 aa).

The region spanning 19–78 (PLVFDMEEDKEDYIFGPHDEYLHTLEVHSNTLIQLERWFTPTGQTRVTVVGPLKARLWVM) is the KH; atypical domain.

It belongs to the KHDC1 family.

It is found in the cytoplasm. Has pro-apoptotic activity. The protein is KH homology domain-containing protein 1A (Khdc1a) of Mus musculus (Mouse).